The primary structure comprises 241 residues: Purine nucleoside phosphorylase DeoD-type 1 (241 aa).

Residue His5 participates in a purine D-ribonucleoside binding. Phosphate is bound by residues Gly21, Arg25, Arg44, and 88–91 (RVGS). A purine D-ribonucleoside is bound by residues 180–182 (EME) and 204–205 (SD). Residue Asp205 is the Proton donor of the active site.

The protein belongs to the PNP/UDP phosphorylase family. Homohexamer; trimer of homodimers.

It catalyses the reaction a purine D-ribonucleoside + phosphate = a purine nucleobase + alpha-D-ribose 1-phosphate. The enzyme catalyses a purine 2'-deoxy-D-ribonucleoside + phosphate = a purine nucleobase + 2-deoxy-alpha-D-ribose 1-phosphate. Its function is as follows. Catalyzes the reversible phosphorolytic breakdown of the N-glycosidic bond in the beta-(deoxy)ribonucleoside molecules, with the formation of the corresponding free purine bases and pentose-1-phosphate. In Photobacterium profundum (strain SS9), this protein is Purine nucleoside phosphorylase DeoD-type 1.